The sequence spans 299 residues: Tricarboxylate transport protein (299 aa).

Solcar repeat units lie at residues 10–97 (VDPL…IKDM), 109–199 (TRGV…IKTL), and 212–297 (LSSG…VLVM). The next 6 membrane-spanning stretches (helical) occupy residues 16-36 (FLAG…FEFA), 66-86 (IGSI…KAGI), 113-133 (IAGL…FEAI), 174-193 (GVLP…LGCY), 215-235 (GLTF…TMPL), and 272-291 (GATP…FTIY).

Belongs to the mitochondrial carrier (TC 2.A.29) family.

The protein resides in the mitochondrion inner membrane. Its function is as follows. Transport of citrate across inner mitochondrial membrane. In Saccharomyces cerevisiae (strain ATCC 204508 / S288c) (Baker's yeast), this protein is Tricarboxylate transport protein (CTP1).